The primary structure comprises 456 residues: MQPATDTIAAIATAPGQAGVGIVRVSGPRAMAIARTMLGFEPKPRYAHYGPFRDRQGELIDEGIGLYFPNPHSFTGEDVFELQGHGGTVILDILLREVCSLGARLARPGEFSERAFLNDKLDLAQAEAIADLIESSSEQAARCAVRSMQGVFSKRVDNLVEAITHLRIYVEAAIDFPEEEIDFLADGKVASDLQGLLEQVQQILGEAQQGTILRDGMKVVIAGRPNAGKSSLLNALAGREAAIVTAIEGTTRDVLREHIHIDGMPLHIIDTAGLRDSPDEVEQIGIARAWEEIRQADRILLMVDATTTDKTEPHEIWPDFIDQLPRSAPVTVIRNKVDLSGEPLGISAESHQTAPVIRLAAKAAEGLEVLREHLKECIGFASTTEGGFLARRRHLDALERARDSLLQGQTQLEGYGAGELLAEDLRAAQDALGEITGHLTPDELLGKIFSSFCIGK.

Arg24, Glu81, and Lys120 together coordinate (6S)-5-formyl-5,6,7,8-tetrahydrofolate. The TrmE-type G domain maps to 216 to 379; the sequence is GMKVVIAGRP…LREHLKECIG (164 aa). Residue Asn226 participates in K(+) binding. GTP is bound by residues 226-231, 245-251, and 270-273; these read NAGKSS, TAIEGTT, and DTAG. Ser230 serves as a coordination point for Mg(2+). 3 residues coordinate K(+): Thr245, Ile247, and Thr250. Position 251 (Thr251) interacts with Mg(2+). Lys456 lines the (6S)-5-formyl-5,6,7,8-tetrahydrofolate pocket.

Belongs to the TRAFAC class TrmE-Era-EngA-EngB-Septin-like GTPase superfamily. TrmE GTPase family. In terms of assembly, homodimer. Heterotetramer of two MnmE and two MnmG subunits. K(+) serves as cofactor.

Its subcellular location is the cytoplasm. In terms of biological role, exhibits a very high intrinsic GTPase hydrolysis rate. Involved in the addition of a carboxymethylaminomethyl (cmnm) group at the wobble position (U34) of certain tRNAs, forming tRNA-cmnm(5)s(2)U34. The protein is tRNA modification GTPase MnmE of Marinobacter nauticus (strain ATCC 700491 / DSM 11845 / VT8) (Marinobacter aquaeolei).